The chain runs to 254 residues: 3-deoxy-manno-octulosonate cytidylyltransferase (254 aa).

Belongs to the KdsB family.

The protein resides in the cytoplasm. It catalyses the reaction 3-deoxy-alpha-D-manno-oct-2-ulosonate + CTP = CMP-3-deoxy-beta-D-manno-octulosonate + diphosphate. The protein operates within nucleotide-sugar biosynthesis; CMP-3-deoxy-D-manno-octulosonate biosynthesis; CMP-3-deoxy-D-manno-octulosonate from 3-deoxy-D-manno-octulosonate and CTP: step 1/1. It participates in bacterial outer membrane biogenesis; lipopolysaccharide biosynthesis. Its function is as follows. Activates KDO (a required 8-carbon sugar) for incorporation into bacterial lipopolysaccharide in Gram-negative bacteria. This Chlamydia trachomatis serovar A (strain ATCC VR-571B / DSM 19440 / HAR-13) protein is 3-deoxy-manno-octulosonate cytidylyltransferase.